We begin with the raw amino-acid sequence, 391 residues long: GTPase Obg (391 aa).

Residues 1–159 (MKFVDEAVVK…REIRLELLLL (159 aa)) enclose the Obg domain. Residues 160–333 (ADVGMLGLPN…LCYKLADFME (174 aa)) enclose the OBG-type G domain. Residues 166 to 173 (GLPNAGKS), 191 to 195 (FTTLI), 213 to 216 (DIPG), 283 to 286 (NKTD), and 314 to 316 (SAI) contribute to the GTP site. Residues S173 and T193 each coordinate Mg(2+). Acidic residues predominate over residues 367-383 (TEEDDDDWDDCDDEDDD). A disordered region spans residues 367–391 (TEEDDDDWDDCDDEDDDGHVVYVRD).

The protein belongs to the TRAFAC class OBG-HflX-like GTPase superfamily. OBG GTPase family. As to quaternary structure, monomer. It depends on Mg(2+) as a cofactor.

Its subcellular location is the cytoplasm. Functionally, an essential GTPase which binds GTP, GDP and possibly (p)ppGpp with moderate affinity, with high nucleotide exchange rates and a fairly low GTP hydrolysis rate. Plays a role in control of the cell cycle, stress response, ribosome biogenesis and in those bacteria that undergo differentiation, in morphogenesis control. The sequence is that of GTPase Obg from Vibrio campbellii (strain ATCC BAA-1116).